Reading from the N-terminus, the 303-residue chain is UDP-N-acetylenolpyruvoylglucosamine reductase (303 aa).

Positions 30–195 (KTGGPADLLA…LSARFEMAKG (166 aa)) constitute an FAD-binding PCMH-type domain. R174 is an active-site residue. S224 serves as the catalytic Proton donor. The active site involves E294.

This sequence belongs to the MurB family. FAD is required as a cofactor.

The protein localises to the cytoplasm. The enzyme catalyses UDP-N-acetyl-alpha-D-muramate + NADP(+) = UDP-N-acetyl-3-O-(1-carboxyvinyl)-alpha-D-glucosamine + NADPH + H(+). It functions in the pathway cell wall biogenesis; peptidoglycan biosynthesis. Its function is as follows. Cell wall formation. This is UDP-N-acetylenolpyruvoylglucosamine reductase from Latilactobacillus sakei subsp. sakei (strain 23K) (Lactobacillus sakei subsp. sakei).